The sequence spans 273 residues: 2-dehydro-3-deoxyphosphooctonate aldolase (273 aa).

This sequence belongs to the KdsA family.

The protein resides in the cytoplasm. It carries out the reaction D-arabinose 5-phosphate + phosphoenolpyruvate + H2O = 3-deoxy-alpha-D-manno-2-octulosonate-8-phosphate + phosphate. It participates in carbohydrate biosynthesis; 3-deoxy-D-manno-octulosonate biosynthesis; 3-deoxy-D-manno-octulosonate from D-ribulose 5-phosphate: step 2/3. The protein operates within bacterial outer membrane biogenesis; lipopolysaccharide biosynthesis. The chain is 2-dehydro-3-deoxyphosphooctonate aldolase from Nitratidesulfovibrio vulgaris (strain ATCC 29579 / DSM 644 / CCUG 34227 / NCIMB 8303 / VKM B-1760 / Hildenborough) (Desulfovibrio vulgaris).